The chain runs to 230 residues: N-(5'-phosphoribosyl)anthranilate isomerase (230 aa).

Belongs to the TrpF family.

It catalyses the reaction N-(5-phospho-beta-D-ribosyl)anthranilate = 1-(2-carboxyphenylamino)-1-deoxy-D-ribulose 5-phosphate. It participates in amino-acid biosynthesis; L-tryptophan biosynthesis; L-tryptophan from chorismate: step 3/5. In Thermosynechococcus vestitus (strain NIES-2133 / IAM M-273 / BP-1), this protein is N-(5'-phosphoribosyl)anthranilate isomerase.